Reading from the N-terminus, the 620-residue chain is 1-deoxy-D-xylulose-5-phosphate synthase (620 aa).

Thiamine diphosphate contacts are provided by residues H80 and 121–123; that span reads GHS. D152 contacts Mg(2+). Residues 153-154, N181, Y288, and E370 contribute to the thiamine diphosphate site; that span reads GA. N181 lines the Mg(2+) pocket.

It belongs to the transketolase family. DXPS subfamily. As to quaternary structure, homodimer. The cofactor is Mg(2+). Requires thiamine diphosphate as cofactor.

The enzyme catalyses D-glyceraldehyde 3-phosphate + pyruvate + H(+) = 1-deoxy-D-xylulose 5-phosphate + CO2. Its pathway is metabolic intermediate biosynthesis; 1-deoxy-D-xylulose 5-phosphate biosynthesis; 1-deoxy-D-xylulose 5-phosphate from D-glyceraldehyde 3-phosphate and pyruvate: step 1/1. In terms of biological role, catalyzes the acyloin condensation reaction between C atoms 2 and 3 of pyruvate and glyceraldehyde 3-phosphate to yield 1-deoxy-D-xylulose-5-phosphate (DXP). This chain is 1-deoxy-D-xylulose-5-phosphate synthase, found in Shigella sonnei (strain Ss046).